Here is a 264-residue protein sequence, read N- to C-terminus: Probable amino-acid-binding protein YxeM (264 aa).

A signal peptide spans 1–20 (MKMKKWTVLVVAALLAVLSA). Cysteine 21 is lipidated: N-palmitoyl cysteine. Cysteine 21 carries S-diacylglycerol cysteine lipidation.

The protein belongs to the bacterial solute-binding protein 3 family. The complex is composed of two ATP-binding proteins (YxeO), two transmembrane proteins (YxeN) and a solute-binding protein (YxeM).

The protein localises to the cell membrane. Its subcellular location is the membrane raft. Its function is as follows. Probably part of the ABC transporter complex YxeMNO that could be involved in amino-acid import. May transport S-methylcysteine. The polypeptide is Probable amino-acid-binding protein YxeM (yxeM) (Bacillus subtilis (strain 168)).